The primary structure comprises 493 residues: Angiopoietin-related protein 2 (493 aa).

An N-terminal signal peptide occupies residues 1–19 (MRPLCMTYWWLGLLATVGA). Coiled coils occupy residues 77-115 (EVHLENRVHKQELELLNNELLKQKRQIETLQQLVEVDGG) and 152-202 (ALEL…QLEE). N-linked (GlcNAc...) asparagine glycans are attached at residues N164 and N192. The region spanning 269–489 (DKPSGPWRDC…KVVMMIRPNP (221 aa)) is the Fibrinogen C-terminal domain. Disulfide bonds link C278/C307 and C430/C443.

As to expression, widely expressed in heart, tongue, lung and skeletal muscle. Also found in lower levels in kidney, epididymis and testis.

The protein resides in the secreted. Induces sprouting in endothelial cells through an autocrine and paracrine action. This is Angiopoietin-related protein 2 (Angptl2) from Mus musculus (Mouse).